Reading from the N-terminus, the 815-residue chain is Phenylalanine--tRNA ligase beta subunit (815 aa).

Positions 39–148 (ATELQKFEVA…EYAVVGDNFT (110 aa)) constitute a tRNA-binding domain. In terms of domain architecture, B5 spans 420 to 495 (LQKIPLDFSV…RIYGYDKIES (76 aa)). Mg(2+) contacts are provided by Asp-473, Asp-479, Glu-482, and Glu-483. The FDX-ACB domain occupies 721 to 814 (SDFQANFRDY…ISQKFQGTLR (94 aa)).

The protein belongs to the phenylalanyl-tRNA synthetase beta subunit family. Type 1 subfamily. Tetramer of two alpha and two beta subunits. It depends on Mg(2+) as a cofactor.

The protein resides in the cytoplasm. It carries out the reaction tRNA(Phe) + L-phenylalanine + ATP = L-phenylalanyl-tRNA(Phe) + AMP + diphosphate + H(+). The polypeptide is Phenylalanine--tRNA ligase beta subunit (Rickettsia typhi (strain ATCC VR-144 / Wilmington)).